The primary structure comprises 490 residues: N-succinylglutamate 5-semialdehyde dehydrogenase (490 aa).

Position 223 to 228 (223 to 228) interacts with NAD(+); that stretch reads GSAGTG. Active-site residues include E246 and C280.

The protein belongs to the aldehyde dehydrogenase family. AstD subfamily.

The enzyme catalyses N-succinyl-L-glutamate 5-semialdehyde + NAD(+) + H2O = N-succinyl-L-glutamate + NADH + 2 H(+). Its pathway is amino-acid degradation; L-arginine degradation via AST pathway; L-glutamate and succinate from L-arginine: step 4/5. Catalyzes the NAD-dependent reduction of succinylglutamate semialdehyde into succinylglutamate. In Serratia proteamaculans (strain 568), this protein is N-succinylglutamate 5-semialdehyde dehydrogenase.